A 246-amino-acid chain; its full sequence is MDATAYRGLLEEGLASLGVEAEPGGVEAVLLHLDLVREWNERMNLTAITDPQEMVIKHALDAASGLAVAGVEPGQRVIDVGTGAGFPGVVWKCLRPGIDLTLLESLQKRCRFLEEVGQAVIGPLAGGEGYQVVWGRAEDVGRNPAHRERYDLVTARAVAELRVLAEYCLPLARVGGRFLAMKGPSVGEEILAAEAAVEKLGGRLEEVRELELPDGGGRRSLVLIRKERPTPKAYPRRAGVPAKSPL.

S-adenosyl-L-methionine is bound by residues glycine 81, phenylalanine 86, 137–138, and arginine 156; that span reads AE. Residues 221 to 246 are disordered; that stretch reads LVLIRKERPTPKAYPRRAGVPAKSPL.

Belongs to the methyltransferase superfamily. RNA methyltransferase RsmG family.

Its subcellular location is the cytoplasm. Functionally, specifically methylates the N7 position of a guanine in 16S rRNA. The sequence is that of Ribosomal RNA small subunit methyltransferase G from Symbiobacterium thermophilum (strain DSM 24528 / JCM 14929 / IAM 14863 / T).